The primary structure comprises 145 residues: D-aminoacyl-tRNA deacylase (145 aa).

Residues 137–138 (GP) carry the Gly-cisPro motif, important for rejection of L-amino acids motif.

The protein belongs to the DTD family. As to quaternary structure, homodimer.

Its subcellular location is the cytoplasm. The catalysed reaction is glycyl-tRNA(Ala) + H2O = tRNA(Ala) + glycine + H(+). The enzyme catalyses a D-aminoacyl-tRNA + H2O = a tRNA + a D-alpha-amino acid + H(+). Its function is as follows. An aminoacyl-tRNA editing enzyme that deacylates mischarged D-aminoacyl-tRNAs. Also deacylates mischarged glycyl-tRNA(Ala), protecting cells against glycine mischarging by AlaRS. Acts via tRNA-based rather than protein-based catalysis; rejects L-amino acids rather than detecting D-amino acids in the active site. By recycling D-aminoacyl-tRNA to D-amino acids and free tRNA molecules, this enzyme counteracts the toxicity associated with the formation of D-aminoacyl-tRNA entities in vivo and helps enforce protein L-homochirality. This chain is D-aminoacyl-tRNA deacylase, found in Dichelobacter nodosus (strain VCS1703A).